A 517-amino-acid chain; its full sequence is Bifunctional purine biosynthesis protein PurH (517 aa).

The MGS-like domain maps to 1–145; sequence MSPLALVSVS…KNHKYVSVLV (145 aa).

Belongs to the PurH family.

The catalysed reaction is (6R)-10-formyltetrahydrofolate + 5-amino-1-(5-phospho-beta-D-ribosyl)imidazole-4-carboxamide = 5-formamido-1-(5-phospho-D-ribosyl)imidazole-4-carboxamide + (6S)-5,6,7,8-tetrahydrofolate. It catalyses the reaction IMP + H2O = 5-formamido-1-(5-phospho-D-ribosyl)imidazole-4-carboxamide. It participates in purine metabolism; IMP biosynthesis via de novo pathway; 5-formamido-1-(5-phospho-D-ribosyl)imidazole-4-carboxamide from 5-amino-1-(5-phospho-D-ribosyl)imidazole-4-carboxamide (10-formyl THF route): step 1/1. The protein operates within purine metabolism; IMP biosynthesis via de novo pathway; IMP from 5-formamido-1-(5-phospho-D-ribosyl)imidazole-4-carboxamide: step 1/1. This is Bifunctional purine biosynthesis protein PurH from Prochlorococcus marinus (strain MIT 9215).